A 330-amino-acid polypeptide reads, in one-letter code: Probable L-asparaginase (330 aa).

Residues 6–330 (PTIALLATGG…EKIQEMFEEY (325 aa)) enclose the Asparaginase/glutaminase domain. Thr16 functions as the O-isoaspartyl threonine intermediate in the catalytic mechanism. Substrate is bound by residues Ser62 and 95-96 (TD).

Belongs to the asparaginase 1 family.

It is found in the cytoplasm. It carries out the reaction L-asparagine + H2O = L-aspartate + NH4(+). The protein is Probable L-asparaginase (ansA) of Helicobacter pylori (strain ATCC 700392 / 26695) (Campylobacter pylori).